A 1496-amino-acid polypeptide reads, in one-letter code: Synaptojanin-2 (1496 aa).

Residues 120–444 (LKKILSSGVF…GHGLSKVFTG (325 aa)) form the SAC domain. One can recognise an RRM domain in the interval 906-985 (DATVIVNLQS…RAVKIRPKTK (80 aa)). Disordered stretches follow at residues 1047–1083 (VVSD…HPTY), 1100–1149 (GNFR…GTHG), 1205–1357 (VPES…LQVL), 1393–1413 (SSAI…AASF), 1442–1461 (EPLD…SAQV), and 1468–1496 (RGLP…TLGV). Residues 1063-1074 (SASTPASKSPAL) show a composition bias toward low complexity. Residues 1116–1130 (RPRPPHPPQRPPPPT) show a composition bias toward pro residues. Ser1139 is subject to Phosphoserine. Residues 1139-1149 (SDASISSGTHG) show a composition bias toward polar residues. Composition is skewed to pro residues over residues 1230 to 1239 (PVLPRRPVPR) and 1279 to 1292 (TPPP…PVPK). Low complexity predominate over residues 1324 to 1338 (ELSSPEAPEAPSLAP). 2 stretches are compositionally biased toward basic and acidic residues: residues 1470-1480 (LPPDHGGKDFS) and 1487-1496 (NKDKRTTLGV).

The protein belongs to the synaptojanin family. It in the central section; belongs to the inositol 1,4,5-trisphosphate 5-phosphatase family. As to quaternary structure, binds to GRB2. Isoform 2A binds to SYNJ2BP/OMP25. As to expression, widely expressed. Isoforms 2B1 and 2B2 are concentrated at nerve terminals in brain and at spermatid manchette in testis.

It localises to the cytoplasm. The protein localises to the cell membrane. Its subcellular location is the presynapse. The protein resides in the cytoskeleton. It is found in the membrane raft. It localises to the mitochondrion. The enzyme catalyses a 1,2-diacyl-sn-glycero-3-phospho-(1D-myo-inositol-4,5-bisphosphate) + H2O = a 1,2-diacyl-sn-glycero-3-phospho-(1D-myo-inositol 4-phosphate) + phosphate. In terms of biological role, inositol 5-phosphatase which may be involved in distinct membrane trafficking and signal transduction pathways. May mediate the inhibitory effect of Rac1 on endocytosis. This chain is Synaptojanin-2 (Synj2), found in Rattus norvegicus (Rat).